A 327-amino-acid chain; its full sequence is Malate dehydrogenase (327 aa).

12–18 (GAAGQIG) is a binding site for NAD(+). Substrate-binding residues include Arg93 and Arg99. Residues Asn106, Gln113, and 130–132 (VGN) contribute to the NAD(+) site. The substrate site is built by Asn132 and Arg163. The active-site Proton acceptor is His188.

It belongs to the LDH/MDH superfamily. MDH type 2 family.

The catalysed reaction is (S)-malate + NAD(+) = oxaloacetate + NADH + H(+). In terms of biological role, catalyzes the reversible oxidation of malate to oxaloacetate. In Paraburkholderia phymatum (strain DSM 17167 / CIP 108236 / LMG 21445 / STM815) (Burkholderia phymatum), this protein is Malate dehydrogenase.